The chain runs to 107 residues: Phosphoribosyl-ATP pyrophosphatase (107 aa).

It belongs to the PRA-PH family.

The protein resides in the cytoplasm. It carries out the reaction 1-(5-phospho-beta-D-ribosyl)-ATP + H2O = 1-(5-phospho-beta-D-ribosyl)-5'-AMP + diphosphate + H(+). Its pathway is amino-acid biosynthesis; L-histidine biosynthesis; L-histidine from 5-phospho-alpha-D-ribose 1-diphosphate: step 2/9. In Bacillus mycoides (strain KBAB4) (Bacillus weihenstephanensis), this protein is Phosphoribosyl-ATP pyrophosphatase.